Here is a 164-residue protein sequence, read N- to C-terminus: V-type proton ATPase subunit c' (164 aa).

Topologically, residues 1 to 14 are vacuolar; it reads MSTQLASNIYAPLY. The helical transmembrane segment at 15-37 threads the bilayer; that stretch reads APFFGFAGCAAAMVLSCLGAAIG. At 38 to 59 the chain is on the cytoplasmic side; the sequence is TAKSGIGIAGIGTFKPELIMKS. Residues 60–80 form a helical membrane-spanning segment; that stretch reads LIPVVMSGILAIYGLVVAVLI. At 81-98 the chain is on the vacuolar side; it reads AGNLSPTEDYTLFNGFMH. The helical transmembrane segment at 99–120 threads the bilayer; it reads LSCGLCVGFACLSSGYAIGMVG. The Cytoplasmic portion of the chain corresponds to 121–132; the sequence is DVGVRKYMHQPR. A helical membrane pass occupies residues 133-158; it reads LFVGIVLILIFSEVLGLYGMIVALIL. At 159–164 the chain is on the vacuolar side; it reads NTRGSE.

Belongs to the V-ATPase proteolipid subunit family. V-ATPase is a heteromultimeric enzyme composed of a peripheral catalytic V1 complex (components A to H) attached to an integral membrane V0 proton pore complex (components: a, c, c', c'', d, e, f and VOA1). The decameric c-ring forms the proton-conducting pore, and is composed of eight proteolipid subunits c, one subunit c' and one subunit c''.

It localises to the vacuole membrane. Proton-conducting pore forming subunit of the V0 complex of vacuolar(H+)-ATPase (V-ATPase), a multisubunit enzyme composed of a peripheral complex (V1) that hydrolyzes ATP and a membrane integral complex (V0) that translocates protons. V-ATPase is responsible for acidifying and maintaining the pH of intracellular compartments. The polypeptide is V-type proton ATPase subunit c' (VMA11) (Saccharomyces cerevisiae (strain ATCC 204508 / S288c) (Baker's yeast)).